A 1113-amino-acid polypeptide reads, in one-letter code: Receptor-type guanylate cyclase gcy-18 (1113 aa).

A signal peptide spans 1-18 (MLKTLLFILIFFNIPIIA). The Extracellular portion of the chain corresponds to 19-499 (IEEIPDIKEN…RGQRCSYLLE (481 aa)). N-linked (GlcNAc...) asparagine glycosylation is found at Asn72, Asn369, and Asn456. Residues 500 to 520 (ISVGSLIILLILISVVFFFLF) traverse the membrane as a helical segment. Residues 521–1113 (RYCENKQLEK…TNYIQNVEGV (593 aa)) are Cytoplasmic-facing. Residues 543–848 (IDEEQVKSMM…RVRLNTEMVL (306 aa)) enclose the Protein kinase domain. Residues 853–884 (SLVDQMMKMMEQYANNLEKLVAERTGMLEEAN) are a coiled coil. Residues 918-1048 (TILFSDIVGF…DTVNVSSRME (131 aa)) enclose the Guanylate cyclase domain. Mg(2+) is bound by residues Asp923, Ile924, and Asp967.

This sequence belongs to the adenylyl cyclase class-4/guanylyl cyclase family. As to expression, expressed specifically in AFD sensory neurons.

Its subcellular location is the cell membrane. It is found in the cell projection. It localises to the cilium. The catalysed reaction is GTP = 3',5'-cyclic GMP + diphosphate. Functionally, guanylate cyclase involved in the production of the second messenger cGMP. Regulates thermotaxis responses in AFD sensory neurons. May regulate AFD neuronal activity such as calcium responses to temperature gradients. The chain is Receptor-type guanylate cyclase gcy-18 from Caenorhabditis elegans.